The following is a 152-amino-acid chain: Ribosome maturation factor RimP (152 aa).

It belongs to the RimP family.

The protein resides in the cytoplasm. Required for maturation of 30S ribosomal subunits. The protein is Ribosome maturation factor RimP of Escherichia coli (strain K12 / MC4100 / BW2952).